A 297-amino-acid polypeptide reads, in one-letter code: Superoxide dismutase 1 copper chaperone (297 aa).

A Cu cation-binding site is contributed by Cys-11. The tract at residues 222-263 (GSSCCSKKDSSPSEKPSCCSQEKKSCCSSKKPSCCSQEKKGC) is disordered. Positions 234–257 (SEKPSCCSQEKKSCCSSKKPSCCS) are enriched in low complexity.

The protein belongs to the CCS1 family.

The protein localises to the cytoplasm. Its function is as follows. Copper chaperone for superoxide dismutase 1 (sod1). Binds copper ions and delivers them specifically to sod1. Also has a role in cell protection against copper ion toxicity during conditions of copper excess. The C-terminal region is thought to act specifically in this sequestration role. The sequence is that of Superoxide dismutase 1 copper chaperone (ccs1) from Schizosaccharomyces pombe (strain 972 / ATCC 24843) (Fission yeast).